We begin with the raw amino-acid sequence, 213 residues long: Imidazole glycerol phosphate synthase subunit HisH (213 aa).

A Glutamine amidotransferase type-1 domain is found at 4-211 (NLGLIDYGMG…LTWLRNGAEP (208 aa)). Residue Cys-82 is the Nucleophile of the active site. Active-site residues include His-186 and Glu-188.

As to quaternary structure, heterodimer of HisH and HisF.

The protein localises to the cytoplasm. The enzyme catalyses 5-[(5-phospho-1-deoxy-D-ribulos-1-ylimino)methylamino]-1-(5-phospho-beta-D-ribosyl)imidazole-4-carboxamide + L-glutamine = D-erythro-1-(imidazol-4-yl)glycerol 3-phosphate + 5-amino-1-(5-phospho-beta-D-ribosyl)imidazole-4-carboxamide + L-glutamate + H(+). It carries out the reaction L-glutamine + H2O = L-glutamate + NH4(+). It functions in the pathway amino-acid biosynthesis; L-histidine biosynthesis; L-histidine from 5-phospho-alpha-D-ribose 1-diphosphate: step 5/9. In terms of biological role, IGPS catalyzes the conversion of PRFAR and glutamine to IGP, AICAR and glutamate. The HisH subunit catalyzes the hydrolysis of glutamine to glutamate and ammonia as part of the synthesis of IGP and AICAR. The resulting ammonia molecule is channeled to the active site of HisF. This Synechococcus sp. (strain CC9605) protein is Imidazole glycerol phosphate synthase subunit HisH.